The following is a 762-amino-acid chain: Polyadenylate-binding protein, cytoplasmic and nuclear (762 aa).

Residues 39–58 (TGEEIDTAGPTPSSAAPHPQ) form a disordered region. The segment covering 48–58 (PTPSSAAPHPQ) has biased composition (low complexity). RRM domains follow at residues 61–139 (ASLY…WSQR), 149–226 (GNVF…HHIP), 242–320 (TNIY…RAQK), and 346–470 (VNLY…LAQR). 3 disordered regions span residues 376-429 (KVMR…KSKL), 596-663 (SALA…AGAP), and 740-762 (VRQQ…EEKA). Residues 389 to 425 (GESKEGEESEKNKENKPEEKEGDDSKPEEKEGEDSKS) are compositionally biased toward basic and acidic residues. The segment covering 600–612 (GGRGGPAGRGPMQ) has biased composition (gly residues). Positions 645–663 (AAGRAPAGAPAGARGAGAP) are enriched in low complexity. A PABC domain is found at 664 to 741 (EGLQGQLAAV…ALAVYDDYVR (78 aa)). Residues 753–762 (SKEEKTEEKA) are compositionally biased toward basic and acidic residues.

This sequence belongs to the polyadenylate-binding protein type-1 family.

The protein resides in the cytoplasm. Its subcellular location is the nucleus. Its function is as follows. Binds the poly(A) tail of mRNA. Appears to be an important mediator of the multiple roles of the poly(A) tail in mRNA biogenesis, stability and translation. In the nucleus, involved in both mRNA cleavage and polyadenylation. Is also required for efficient mRNA export to the cytoplasm. Acts in concert with a poly(A)-specific nuclease (PAN) to affect poly(A) tail shortening, which may occur concomitantly with either nucleocytoplasmic mRNA transport or translational initiation. In the cytoplasm, stimulates translation initiation and regulates mRNA decay through translation termination-coupled poly(A) shortening, probably mediated by PAN. This chain is Polyadenylate-binding protein, cytoplasmic and nuclear (PAB1), found in Pyricularia oryzae (strain 70-15 / ATCC MYA-4617 / FGSC 8958) (Rice blast fungus).